The following is a 204-amino-acid chain: MTKILNINSSVRIGDSISRKVTTEFINKWKAREADAIVVERDLAAQPLPHIDGSTLGAFFTPAEQRTPEQAQIATLSETLVRELFDADVIVIGAPMYNFSITSGLKAWIDHVARAGVTFKYTDKGPVGLLTGKKVYIFTASGGVYSEGPAQAMDFNATYLRTVLGFIGLTDVTIINSEGVAMGAEGVNKALAKTSNTINELLPA.

FMN contacts are provided by residues Ser10, 16–18 (SIS), and 96–99 (MYNF).

It belongs to the azoreductase type 1 family. In terms of assembly, homodimer. Requires FMN as cofactor.

It catalyses the reaction 2 a quinone + NADH + H(+) = 2 a 1,4-benzosemiquinone + NAD(+). The enzyme catalyses N,N-dimethyl-1,4-phenylenediamine + anthranilate + 2 NAD(+) = 2-(4-dimethylaminophenyl)diazenylbenzoate + 2 NADH + 2 H(+). Quinone reductase that provides resistance to thiol-specific stress caused by electrophilic quinones. Functionally, also exhibits azoreductase activity. Catalyzes the reductive cleavage of the azo bond in aromatic azo compounds to the corresponding amines. This Herminiimonas arsenicoxydans protein is FMN-dependent NADH:quinone oxidoreductase.